The chain runs to 531 residues: Protein RPN4 (531 aa).

The interval 338–432 is disordered; sequence RFPSPSTSAN…PSAHTSSSDG (95 aa). The span at 341-354 shows a compositional bias: polar residues; that stretch reads SPSTSANVPSTATT. The segment covering 362 to 375 has biased composition (low complexity); sequence SSSNRSCVSNSNEN. The Nuclear localization signal signature appears at 382-398; sequence KKPTSAVVSSNASRRKL. Positions 394-407 are enriched in basic residues; sequence SRRKLINYTKKHLS. Residues 408 to 430 are compositionally biased toward low complexity; it reads SHSSTNSNSKPSTASPSAHTSSS.

Probably interacts with SEC63. Interacts with MUB1, UBR2 and RPN2. Post-translationally, ubiquitinated by UBR2 in the presence of UBC2; which leads to proteasomal degradation.

It localises to the nucleus. In terms of biological role, acts as a transcriptional activator of a number of genes encoding proteasomal subunits. Binds to a PACE (proteasome-associated control element) DNA sequence 5'-GGTGGCAAA-3'. Its expression is in turn regulated by the 26S proteasome, thereby providing a negative feedback control mechanism. Required for normal growth at low temperatures. This Saccharomyces cerevisiae (strain ATCC 204508 / S288c) (Baker's yeast) protein is Protein RPN4 (RPN4).